Reading from the N-terminus, the 179-residue chain is Protein YjaZ (179 aa).

This is Protein YjaZ from Escherichia coli (strain K12).